The chain runs to 263 residues: Polyamine aminopropyltransferase (263 aa).

Positions 1-221 (MARHPYRRLR…AVMAFQSSPK (221 aa)) constitute a PABS domain. S-methyl-5'-thioadenosine-binding positions include Asp-98 and 126–127 (DG). The Proton acceptor role is filled by Asp-144.

The protein belongs to the spermidine/spermine synthase family. As to quaternary structure, homodimer or homotetramer.

The protein resides in the cytoplasm. It carries out the reaction S-adenosyl 3-(methylsulfanyl)propylamine + putrescine = S-methyl-5'-thioadenosine + spermidine + H(+). It functions in the pathway amine and polyamine biosynthesis; spermidine biosynthesis; spermidine from putrescine: step 1/1. In terms of biological role, catalyzes the irreversible transfer of a propylamine group from the amino donor S-adenosylmethioninamine (decarboxy-AdoMet) to putrescine (1,4-diaminobutane) to yield spermidine. This chain is Polyamine aminopropyltransferase, found in Neisseria meningitidis serogroup A / serotype 4A (strain DSM 15465 / Z2491).